Here is a 351-residue protein sequence, read N- to C-terminus: Serine/threonine-protein kinase ZRK1 (351 aa).

In terms of domain architecture, Protein kinase spans 60 to 347 (FDSSCFVSQD…KELKQIEASL (288 aa)). Residues 66 to 74 (VSQDVYYKW) and K87 each bind ATP. Catalysis depends on D191, which acts as the Proton acceptor.

Belongs to the protein kinase superfamily. Ser/Thr protein kinase family. ZRK subfamily. In terms of assembly, component of a stable high-order oligomeric complex made of RKS1 and RPP13L4/ZAR1 which recruits Xanthomonas campestris effector XopAC/AvrAC-mediated uridylylated PBL2 in the presence of ATP to form a wheel-like pentameric resistosome; this complex triggers immunity toward X.campestris in vascular tissues. Interacts with RPP13L4/ZAR1 and uridylylated PBL2. In terms of tissue distribution, expressed at high levels in germinating seeds and at lower levels in adult leaves.

The enzyme catalyses L-seryl-[protein] + ATP = O-phospho-L-seryl-[protein] + ADP + H(+). It carries out the reaction L-threonyl-[protein] + ATP = O-phospho-L-threonyl-[protein] + ADP + H(+). Its function is as follows. Serine/threonine-protein kinase that confers a broad-spectrum quantitative disease resistance (QDR) to the pathogenic biotrophic bacteria Xanthomonas campestris (e.g. pv. campestris (Xcc), pv. raphani, pv. armoriaceae and pv. incanae) by restricting bacterial spread to the vascular system from the infection site; X.campestris causes black rot disease in crops. Seems to not have any kinase activity. This is Serine/threonine-protein kinase ZRK1 from Arabidopsis thaliana (Mouse-ear cress).